We begin with the raw amino-acid sequence, 477 residues long: Cytochrome c oxidase subunit 1 (477 aa).

The chain crosses the membrane as a helical span at residues 16–36 (VGTMYLMLGMWSGFGGLNLSW). 2 residues coordinate Ca(2+): E41 and G46. H62 lines the Fe(II)-heme a pocket. A run of 6 helical transmembrane segments spans residues 64–84 (IMMI…NWLL), 101–121 (FSFW…FIDY), 149–171 (ILGL…VTFL), 185–205 (LFVW…PVLA), 236–256 (LFWF…FGLV), and 269–289 (VFGS…GFIV). H242 contributes to the Cu cation binding site. The 1'-histidyl-3'-tyrosine (His-Tyr) cross-link spans 242 to 246 (HPEVY). An O2-binding site is contributed by Y246. Cu cation is bound by residues H292 and H293. Transmembrane regions (helical) follow at residues 309 to 329 (AVTM…IATI) and 340 to 360 (TLWV…GVIL). Mg(2+) contacts are provided by H370 and D371. H378 serves as a coordination point for heme a3. Residue H380 coordinates Fe(II)-heme a. 2 helical membrane passes run 382 to 402 (VLSM…FPFF) and 416 to 436 (FFLT…LGLG). P443 contributes to the Ca(2+) binding site. A helical transmembrane segment spans residues 455–475 (WSTIGCAMVMVSVSLFIHMQW).

This sequence belongs to the heme-copper respiratory oxidase family. In terms of assembly, component of the cytochrome c oxidase (complex IV, CIV), a multisubunit enzyme composed of a catalytic core of 3 subunits and several supernumerary subunits. The complex exists as a monomer or a dimer and forms supercomplexes (SCs) in the inner mitochondrial membrane with ubiquinol-cytochrome c oxidoreductase (cytochrome b-c1 complex, complex III, CIII). Requires heme as cofactor. Cu cation is required as a cofactor.

Its subcellular location is the mitochondrion inner membrane. It carries out the reaction 4 Fe(II)-[cytochrome c] + O2 + 8 H(+)(in) = 4 Fe(III)-[cytochrome c] + 2 H2O + 4 H(+)(out). It participates in energy metabolism; oxidative phosphorylation. Component of the cytochrome c oxidase, the last enzyme in the mitochondrial electron transport chain which drives oxidative phosphorylation. The respiratory chain contains 3 multisubunit complexes succinate dehydrogenase (complex II, CII), ubiquinol-cytochrome c oxidoreductase (cytochrome b-c1 complex, complex III, CIII) and cytochrome c oxidase (complex IV, CIV), that cooperate to transfer electrons derived from NADH and succinate to molecular oxygen, creating an electrochemical gradient over the inner membrane that drives transmembrane transport and the ATP synthase. Cytochrome c oxidase is the component of the respiratory chain that catalyzes the reduction of oxygen to water. Electrons originating from reduced cytochrome c in the intermembrane space (IMS) are transferred via the dinuclear copper A center (CU(A)) of subunit 2 and heme A of subunit 1 to the active site in subunit 1, a binuclear center (BNC) formed by heme A3 and copper B (CU(B)). The BNC reduces molecular oxygen to 2 water molecules using 4 electrons from cytochrome c in the IMS and 4 protons from the mitochondrial matrix. This Pecten maximus (King scallop) protein is Cytochrome c oxidase subunit 1 (COI).